Here is a 377-residue protein sequence, read N- to C-terminus: Putative FBD-associated F-box protein At5g44940 (377 aa).

The F-box domain maps to 4–50 (FDYISEFPDCLLTQILLNLPTKDSVKTSVLSKRWRNLWLNVPGLRLR). Residues 297–346 (IDFHKVPQCLISTLEYVQIEELILKEKSGIKLVDYFLENSAVLKKLTLSF) enclose the FBD domain.

The sequence is that of Putative FBD-associated F-box protein At5g44940 from Arabidopsis thaliana (Mouse-ear cress).